Here is a 239-residue protein sequence, read N- to C-terminus: 2-C-methyl-D-erythritol 4-phosphate cytidylyltransferase (239 aa).

Belongs to the IspD/TarI cytidylyltransferase family. IspD subfamily.

It carries out the reaction 2-C-methyl-D-erythritol 4-phosphate + CTP + H(+) = 4-CDP-2-C-methyl-D-erythritol + diphosphate. It functions in the pathway isoprenoid biosynthesis; isopentenyl diphosphate biosynthesis via DXP pathway; isopentenyl diphosphate from 1-deoxy-D-xylulose 5-phosphate: step 2/6. Functionally, catalyzes the formation of 4-diphosphocytidyl-2-C-methyl-D-erythritol from CTP and 2-C-methyl-D-erythritol 4-phosphate (MEP). The protein is 2-C-methyl-D-erythritol 4-phosphate cytidylyltransferase of Acidobacterium capsulatum (strain ATCC 51196 / DSM 11244 / BCRC 80197 / JCM 7670 / NBRC 15755 / NCIMB 13165 / 161).